A 265-amino-acid polypeptide reads, in one-letter code: MICOS complex subunit Mic27 (265 aa).

Residues 1-27 (MAAFRMGKLTTIPAGLIYASINVRLAK) constitute a mitochondrion transit peptide. Residues 28-110 (EEEPKKQLVR…YVYLKNPPQD (83 aa)) lie on the Mitochondrial intermembrane side of the membrane. The chain crosses the membrane as a helical span at residues 111–129 (FLPKMGVITASGLAGLLSA). The Mitochondrial matrix segment spans residues 130 to 137 (RKGSRFKK). A helical membrane pass occupies residues 138 to 155 (IAYPLGLATLGATVCYPA). Over 156–265 (QSVIIAKITG…DDKDMYSTRS (110 aa)) the chain is Mitochondrial intermembrane. 2 disordered regions span residues 187 to 215 (SENESLPEPKEESKEGRSDEIHASLPDLK) and 229 to 265 (VIKSESTSGTTQFIPDPKLMDHGQSHPDDKDMYSTRS). Serine 204 carries the post-translational modification Phosphoserine. Residues 229–241 (VIKSESTSGTTQF) are compositionally biased toward polar residues. Over residues 246 to 265 (KLMDHGQSHPDDKDMYSTRS) the composition is skewed to basic and acidic residues.

Belongs to the apolipoprotein O/MICOS complex subunit Mic27 family. In terms of assembly, component of the mitochondrial contact site and cristae organizing system (MICOS) complex, composed of at least MICOS10/MIC10, CHCHD3/MIC19, CHCHD6/MIC25, APOOL/MIC27, IMMT/MIC60, APOO/MIC23/MIC26 and MICOS13/MIC13. This complex was also known under the names MINOS or MitOS complex. The MICOS complex associates with mitochondrial outer membrane proteins SAMM50, MTX1 and MTX2 (together described as components of the mitochondrial outer membrane sorting assembly machinery (SAM) complex) and DNAJC11, mitochondrial inner membrane protein TMEM11 and with HSPA9. The MICOS and SAM complexes together with DNAJC11 are part of a large protein complex spanning both membranes termed the mitochondrial intermembrane space bridging (MIB) complex. Interacts with MICOS10/MIC10, IMMT/MIC60 and APOO/MIC23/MIC26.

The protein resides in the mitochondrion inner membrane. Its subcellular location is the mitochondrion. Its function is as follows. Component of the MICOS complex, a large protein complex of the mitochondrial inner membrane that plays crucial roles in the maintenance of crista junctions, inner membrane architecture, and formation of contact sites to the outer membrane. Specifically binds to cardiolipin (in vitro) but not to the precursor lipid phosphatidylglycerol. Plays a crucial role in crista junction formation and mitochondrial function. The chain is MICOS complex subunit Mic27 (Apool) from Mus musculus (Mouse).